A 597-amino-acid polypeptide reads, in one-letter code: Aspartate--tRNA(Asp/Asn) ligase (597 aa).

Position 175 (glutamate 175) interacts with L-aspartate. Residues 199 to 202 (QLFK) form an aspartate region. Residue arginine 221 participates in L-aspartate binding. ATP-binding positions include 221–223 (RDE) and glutamine 230. Histidine 453 is an L-aspartate binding site. Glutamate 487 contacts ATP. Residue arginine 494 coordinates L-aspartate. Residue 539–542 (GWDR) participates in ATP binding. Positions 562 to 597 (SGGGVDPLTDAPAPITPEQRKESGIDAKPKKKETKN) are disordered. Residues 579-589 (EQRKESGIDAK) show a composition bias toward basic and acidic residues.

It belongs to the class-II aminoacyl-tRNA synthetase family. Type 1 subfamily. As to quaternary structure, homodimer.

The protein resides in the cytoplasm. The catalysed reaction is tRNA(Asx) + L-aspartate + ATP = L-aspartyl-tRNA(Asx) + AMP + diphosphate. Aspartyl-tRNA synthetase with relaxed tRNA specificity since it is able to aspartylate not only its cognate tRNA(Asp) but also tRNA(Asn). Reaction proceeds in two steps: L-aspartate is first activated by ATP to form Asp-AMP and then transferred to the acceptor end of tRNA(Asp/Asn). This Corynebacterium kroppenstedtii (strain DSM 44385 / JCM 11950 / CIP 105744 / CCUG 35717) protein is Aspartate--tRNA(Asp/Asn) ligase.